Reading from the N-terminus, the 229-residue chain is Purine nucleoside phosphorylase BB_0467 (229 aa).

Zn(2+) contacts are provided by His55, Cys91, and His108.

Belongs to the purine nucleoside phosphorylase YfiH/LACC1 family. In terms of assembly, homodimer. Requires Cu(2+) as cofactor. It depends on Zn(2+) as a cofactor.

It catalyses the reaction adenosine + phosphate = alpha-D-ribose 1-phosphate + adenine. It carries out the reaction S-methyl-5'-thioadenosine + phosphate = 5-(methylsulfanyl)-alpha-D-ribose 1-phosphate + adenine. The enzyme catalyses inosine + phosphate = alpha-D-ribose 1-phosphate + hypoxanthine. The catalysed reaction is adenosine + H2O + H(+) = inosine + NH4(+). Purine nucleoside enzyme that catalyzes the phosphorolysis of adenosine and inosine nucleosides, yielding D-ribose 1-phosphate and the respective free bases, adenine and hypoxanthine. Also catalyzes the phosphorolysis of S-methyl-5'-thioadenosine into adenine and S-methyl-5-thio-alpha-D-ribose 1-phosphate. Also has adenosine deaminase activity. This is Purine nucleoside phosphorylase BB_0467 from Borreliella burgdorferi (strain ATCC 35210 / DSM 4680 / CIP 102532 / B31) (Borrelia burgdorferi).